The primary structure comprises 953 residues: Coatomer subunit beta (953 aa).

Thr2 bears the N-acetylthreonine mark. HEAT repeat units follow at residues 96 to 131 (HEMI…KEAE), 132 to 168 (LLEP…NFEH), 240 to 276 (SERA…SAPT), 277 to 314 (AIKA…HPAH), 316 to 353 (RVLQ…SRNV), and 396 to 433 (DMAA…RFDN). At Lys494 the chain carries N6-acetyllysine.

Oligomeric complex that consists of at least the alpha, beta, beta', gamma, delta, epsilon and zeta subunits. Interacts with ARF1 (myristoylated); this interaction is required for binding of COPB1 to Golgi membranes. Interacts with CAPN8 and PRKCE. Interacts with SCYL1. Interacts with COPG1. Interacts (via trunk domain) with ARF1 (via switch I region); the interaction is direct. Interacts with KCNK2 (via N-terminus); this interaction increases the channel-mediated whole cell currents and promotes plasma membrane expression of KCNK2. Interacts with STX17. Interacts with TMEM115. Interacts with TMEM41B. In terms of processing, proteolytically cleaved between Ser-528 and Ser-529 by CAPN8.

The protein resides in the cytoplasm. It is found in the cytosol. It localises to the golgi apparatus membrane. The protein localises to the cytoplasmic vesicle. Its subcellular location is the COPI-coated vesicle membrane. The protein resides in the cell membrane. It is found in the endoplasmic reticulum-Golgi intermediate compartment. The coatomer is a cytosolic protein complex that binds to dilysine motifs and reversibly associates with Golgi non-clathrin-coated vesicles, which further mediate biosynthetic protein transport from the ER, via the Golgi up to the trans Golgi network. Coatomer complex is required for budding from Golgi membranes, and is essential for the retrograde Golgi-to-ER transport of dilysine-tagged proteins. In mammals, the coatomer can only be recruited by membranes associated to ADP-ribosylation factors (ARFs), which are small GTP-binding proteins; the complex also influences the Golgi structural integrity, as well as the processing, activity, and endocytic recycling of LDL receptors. Involved in the Golgi disassembly and reassembly processes during cell cycle. Plays a functional role in facilitating the transport of kappa-type opioid receptor mRNAs into axons and enhances translation of these proteins. Required for limiting lipid storage in lipid droplets. Involved in lipid homeostasis by regulating the presence of perilipin family members PLIN2 and PLIN3 at the lipid droplet surface and promoting the association of adipocyte surface triglyceride lipase (PNPLA2) with the lipid droplet to mediate lipolysis. Involved in autophagy by playing a role in early endosome function. Plays a role in organellar compartmentalization of secretory compartments including endoplasmic reticulum (ER)-Golgi intermediate compartment (ERGIC), Golgi, trans-Golgi network (TGN) and recycling endosomes, and in biosynthetic transport of CAV1. The sequence is that of Coatomer subunit beta (COPB1) from Bos taurus (Bovine).